A 392-amino-acid polypeptide reads, in one-letter code: GTPase Obg (392 aa).

An Obg domain is found at 1-159; it reads MKFIDEALIR…RDLQLELMLL (159 aa). Residues 160–333 form the OBG-type G domain; it reads ADVGMLGLPN…LCRDIMDFIE (174 aa). GTP is bound by residues 166-173, 191-195, 213-216, 283-286, and 314-316; these read GLPNAGKS, FTTLV, DIPG, NKID, and SAA. Mg(2+) contacts are provided by S173 and T193. The interval 362–392 is disordered; it reads EQVFTEDDQEGDDWDDWSEDDEEGVEIIYKP. The segment covering 365 to 386 has biased composition (acidic residues); sequence FTEDDQEGDDWDDWSEDDEEGV.

This sequence belongs to the TRAFAC class OBG-HflX-like GTPase superfamily. OBG GTPase family. As to quaternary structure, monomer. The cofactor is Mg(2+).

Its subcellular location is the cytoplasm. Functionally, an essential GTPase which binds GTP, GDP and possibly (p)ppGpp with moderate affinity, with high nucleotide exchange rates and a fairly low GTP hydrolysis rate. Plays a role in control of the cell cycle, stress response, ribosome biogenesis and in those bacteria that undergo differentiation, in morphogenesis control. In Histophilus somni (strain 129Pt) (Haemophilus somnus), this protein is GTPase Obg.